Reading from the N-terminus, the 229-residue chain is Ribonuclease 3 (229 aa).

Residues Leu5–Gly127 form the RNase III domain. Glu40 is a binding site for Mg(2+). Residue Asp44 is part of the active site. 2 residues coordinate Mg(2+): Asp113 and Glu116. Glu116 is a catalytic residue. The DRBM domain maps to Asp154–Val224.

Belongs to the ribonuclease III family. Homodimer. It depends on Mg(2+) as a cofactor.

The protein resides in the cytoplasm. The enzyme catalyses Endonucleolytic cleavage to 5'-phosphomonoester.. In terms of biological role, digests double-stranded RNA. Involved in the processing of primary rRNA transcript to yield the immediate precursors to the large and small rRNAs (23S and 16S). Processes some mRNAs, and tRNAs when they are encoded in the rRNA operon. Processes pre-crRNA and tracrRNA of type II CRISPR loci if present in the organism. This Pseudomonas fluorescens (strain SBW25) protein is Ribonuclease 3.